The chain runs to 357 residues: Heme A synthase (357 aa).

The next 5 helical transmembrane spans lie at 24 to 44 (LVRY…MVGG), 110 to 130 (MLAR…WVTG), 140 to 160 (MLGL…MVAS), 175 to 195 (IHLT…RGLV), and 209 to 229 (FAGW…LVAG). Residue histidine 272 coordinates heme. Helical transmembrane passes span 274–294 (MFAY…WKQV), 303–323 (TIVL…TLLM), and 325–345 (VPLH…AFAV). Histidine 333 contacts heme.

This sequence belongs to the COX15/CtaA family. Type 2 subfamily. In terms of assembly, interacts with CtaB. Heme b serves as cofactor.

Its subcellular location is the cell membrane. It catalyses the reaction Fe(II)-heme o + 2 A + H2O = Fe(II)-heme a + 2 AH2. The protein operates within porphyrin-containing compound metabolism; heme A biosynthesis; heme A from heme O: step 1/1. Functionally, catalyzes the conversion of heme O to heme A by two successive hydroxylations of the methyl group at C8. The first hydroxylation forms heme I, the second hydroxylation results in an unstable dihydroxymethyl group, which spontaneously dehydrates, resulting in the formyl group of heme A. This is Heme A synthase from Brucella anthropi (strain ATCC 49188 / DSM 6882 / CCUG 24695 / JCM 21032 / LMG 3331 / NBRC 15819 / NCTC 12168 / Alc 37) (Ochrobactrum anthropi).